The following is a 281-amino-acid chain: Diaminopimelate epimerase (281 aa).

Substrate is bound by residues Asn13, Gln46, and Asn66. Cys75 acts as the Proton donor in catalysis. Substrate-binding positions include 76–77, Asn160, Asn193, and 211–212; these read GN and ER. Catalysis depends on Cys220, which acts as the Proton acceptor. 221–222 is a binding site for substrate; the sequence is GT.

Belongs to the diaminopimelate epimerase family. Homodimer.

Its subcellular location is the cytoplasm. It catalyses the reaction (2S,6S)-2,6-diaminopimelate = meso-2,6-diaminopimelate. It participates in amino-acid biosynthesis; L-lysine biosynthesis via DAP pathway; DL-2,6-diaminopimelate from LL-2,6-diaminopimelate: step 1/1. Functionally, catalyzes the stereoinversion of LL-2,6-diaminopimelate (L,L-DAP) to meso-diaminopimelate (meso-DAP), a precursor of L-lysine and an essential component of the bacterial peptidoglycan. The protein is Diaminopimelate epimerase of Acinetobacter baumannii (strain ATCC 17978 / DSM 105126 / CIP 53.77 / LMG 1025 / NCDC KC755 / 5377).